The sequence spans 284 residues: Acetylglutamate kinase (284 aa).

Substrate contacts are provided by residues 64-65 (GG), Arg86, and Asn181.

It belongs to the acetylglutamate kinase family. ArgB subfamily.

It is found in the cytoplasm. It carries out the reaction N-acetyl-L-glutamate + ATP = N-acetyl-L-glutamyl 5-phosphate + ADP. It participates in amino-acid biosynthesis; L-arginine biosynthesis; N(2)-acetyl-L-ornithine from L-glutamate: step 2/4. Catalyzes the ATP-dependent phosphorylation of N-acetyl-L-glutamate. The chain is Acetylglutamate kinase from Nitratiruptor sp. (strain SB155-2).